The chain runs to 165 residues: Large ribosomal subunit protein uL15 (165 aa).

Over residues 1–30 (MTNKKRRQRGSRTHGGGTHKNRRGAGHRGG) the composition is skewed to basic residues. Disordered regions lie at residues 1–39 (MTNKKRRQRGSRTHGGGTHKNRRGAGHRGGRGAAGRAKH) and 137–165 (AGGEATLSERAEEAADESENTSDDEDDEA). Acidic residues predominate over residues 150 to 165 (AADESENTSDDEDDEA).

This sequence belongs to the universal ribosomal protein uL15 family. In terms of assembly, part of the 50S ribosomal subunit.

Its function is as follows. Binds to the 23S rRNA. The chain is Large ribosomal subunit protein uL15 from Halorubrum lacusprofundi (strain ATCC 49239 / DSM 5036 / JCM 8891 / ACAM 34).